A 357-amino-acid polypeptide reads, in one-letter code: Elongation factor Ts (357 aa).

The tract at residues 82–85 (TDFV) is involved in Mg(2+) ion dislocation from EF-Tu.

Belongs to the EF-Ts family.

The protein resides in the cytoplasm. Its function is as follows. Associates with the EF-Tu.GDP complex and induces the exchange of GDP to GTP. It remains bound to the aminoacyl-tRNA.EF-Tu.GTP complex up to the GTP hydrolysis stage on the ribosome. The chain is Elongation factor Ts from Campylobacter jejuni subsp. doylei (strain ATCC BAA-1458 / RM4099 / 269.97).